Consider the following 337-residue polypeptide: Fructose-1,6-bisphosphatase class 1 (337 aa).

4 residues coordinate Mg(2+): Glu89, Asp112, Leu114, and Asp115. Residues 115 to 118 (DGSS), Asn208, Tyr241, and Lys271 each bind substrate. Glu277 lines the Mg(2+) pocket.

It belongs to the FBPase class 1 family. In terms of assembly, homotetramer. Requires Mg(2+) as cofactor.

It is found in the cytoplasm. The enzyme catalyses beta-D-fructose 1,6-bisphosphate + H2O = beta-D-fructose 6-phosphate + phosphate. The protein operates within carbohydrate biosynthesis; gluconeogenesis. This is Fructose-1,6-bisphosphatase class 1 from Yersinia pestis bv. Antiqua (strain Antiqua).